We begin with the raw amino-acid sequence, 248 residues long: Proteasome subunit alpha (248 aa).

Belongs to the peptidase T1A family. As to quaternary structure, the 20S proteasome core is composed of 14 alpha and 14 beta subunits that assemble into four stacked heptameric rings, resulting in a barrel-shaped structure. The two inner rings, each composed of seven catalytic beta subunits, are sandwiched by two outer rings, each composed of seven alpha subunits. The catalytic chamber with the active sites is on the inside of the barrel. Has a gated structure, the ends of the cylinder being occluded by the N-termini of the alpha-subunits. Is capped by the proteasome-associated ATPase, ARC.

The protein resides in the cytoplasm. It functions in the pathway protein degradation; proteasomal Pup-dependent pathway. With respect to regulation, the formation of the proteasomal ATPase ARC-20S proteasome complex, likely via the docking of the C-termini of ARC into the intersubunit pockets in the alpha-rings, may trigger opening of the gate for substrate entry. Interconversion between the open-gate and close-gate conformations leads to a dynamic regulation of the 20S proteasome proteolysis activity. Its function is as follows. Component of the proteasome core, a large protease complex with broad specificity involved in protein degradation. This is Proteasome subunit alpha from Mycobacterium bovis (strain BCG / Pasteur 1173P2).